The following is a 367-amino-acid chain: tRNA 2-selenouridine synthase (367 aa).

Positions 15 to 138 (FLQARPLIDV…LRTFLIQILE (124 aa)) constitute a Rhodanese domain. Cys-98 serves as the catalytic S-selanylcysteine intermediate.

Belongs to the SelU family. As to quaternary structure, monomer.

It catalyses the reaction 5-methylaminomethyl-2-thiouridine(34) in tRNA + selenophosphate + (2E)-geranyl diphosphate + H2O + H(+) = 5-methylaminomethyl-2-selenouridine(34) in tRNA + (2E)-thiogeraniol + phosphate + diphosphate. The catalysed reaction is 5-methylaminomethyl-2-thiouridine(34) in tRNA + (2E)-geranyl diphosphate = 5-methylaminomethyl-S-(2E)-geranyl-thiouridine(34) in tRNA + diphosphate. The enzyme catalyses 5-methylaminomethyl-S-(2E)-geranyl-thiouridine(34) in tRNA + selenophosphate + H(+) = 5-methylaminomethyl-2-(Se-phospho)selenouridine(34) in tRNA + (2E)-thiogeraniol. It carries out the reaction 5-methylaminomethyl-2-(Se-phospho)selenouridine(34) in tRNA + H2O = 5-methylaminomethyl-2-selenouridine(34) in tRNA + phosphate. In terms of biological role, involved in the post-transcriptional modification of the uridine at the wobble position (U34) of tRNA(Lys), tRNA(Glu) and tRNA(Gln). Catalyzes the conversion of 2-thiouridine (S2U-RNA) to 2-selenouridine (Se2U-RNA). Acts in a two-step process involving geranylation of 2-thiouridine (S2U) to S-geranyl-2-thiouridine (geS2U) and subsequent selenation of the latter derivative to 2-selenouridine (Se2U) in the tRNA chain. The chain is tRNA 2-selenouridine synthase from Shewanella denitrificans (strain OS217 / ATCC BAA-1090 / DSM 15013).